A 149-amino-acid chain; its full sequence is Non-structural protein 7b (149 aa).

The polypeptide is Non-structural protein 7b (Bat coronavirus HKU9 (BtCoV)).